Consider the following 1418-residue polypeptide: Protein ced-11 (1418 aa).

7 helical membrane-spanning segments follow: residues F617–V637, Y755–L775, L782–L802, V818–P838, V856–L876, F898–F918, and I986–F1006.

It is found in the membrane. Plays a major role in programmed cell death. This Caenorhabditis elegans protein is Protein ced-11 (ced-11).